Here is a 432-residue protein sequence, read N- to C-terminus: Peptidase B (432 aa).

The Mn(2+) site is built by Lys196 and Asp201. Lys208 is a catalytic residue. Asp219, Asp278, and Glu280 together coordinate Mn(2+). Residue Arg282 is part of the active site.

This sequence belongs to the peptidase M17 family. In terms of assembly, homohexamer. The cofactor is Mn(2+).

The protein localises to the cytoplasm. It carries out the reaction Release of an N-terminal amino acid, Xaa, from a peptide or arylamide. Xaa is preferably Glu or Asp but may be other amino acids, including Leu, Met, His, Cys and Gln.. Functionally, probably plays an important role in intracellular peptide degradation. The chain is Peptidase B from Vibrio parahaemolyticus serotype O3:K6 (strain RIMD 2210633).